We begin with the raw amino-acid sequence, 474 residues long: tRNA-2-methylthio-N(6)-dimethylallyladenosine synthase (474 aa).

In terms of domain architecture, MTTase N-terminal spans 3–120 (KKLLIKTWGC…LPEMIKQSQS (118 aa)). The [4Fe-4S] cluster site is built by Cys12, Cys49, Cys83, Cys157, Cys161, and Cys164. Positions 143–375 (RAEGATAFVS…QQQINAQAMR (233 aa)) constitute a Radical SAM core domain. The region spanning 378–441 (RLMLGTEQRV…ANSLRGEIVR (64 aa)) is the TRAM domain.

The protein belongs to the methylthiotransferase family. MiaB subfamily. Monomer. [4Fe-4S] cluster is required as a cofactor.

It localises to the cytoplasm. The catalysed reaction is N(6)-dimethylallyladenosine(37) in tRNA + (sulfur carrier)-SH + AH2 + 2 S-adenosyl-L-methionine = 2-methylsulfanyl-N(6)-dimethylallyladenosine(37) in tRNA + (sulfur carrier)-H + 5'-deoxyadenosine + L-methionine + A + S-adenosyl-L-homocysteine + 2 H(+). Its function is as follows. Catalyzes the methylthiolation of N6-(dimethylallyl)adenosine (i(6)A), leading to the formation of 2-methylthio-N6-(dimethylallyl)adenosine (ms(2)i(6)A) at position 37 in tRNAs that read codons beginning with uridine. The polypeptide is tRNA-2-methylthio-N(6)-dimethylallyladenosine synthase (Vibrio vulnificus (strain YJ016)).